The sequence spans 363 residues: Eukaryotic translation initiation factor 3 subunit H (363 aa).

Positions 13-163 (VQVEALVVMK…LRAFRLSTAF (151 aa)) constitute an MPN domain.

Belongs to the eIF-3 subunit H family. As to quaternary structure, component of the eukaryotic translation initiation factor 3 (eIF-3) complex.

The protein resides in the cytoplasm. Functionally, component of the eukaryotic translation initiation factor 3 (eIF-3) complex, which is involved in protein synthesis of a specialized repertoire of mRNAs and, together with other initiation factors, stimulates binding of mRNA and methionyl-tRNAi to the 40S ribosome. The eIF-3 complex specifically targets and initiates translation of a subset of mRNAs involved in cell proliferation. This is Eukaryotic translation initiation factor 3 subunit H from Pyricularia oryzae (strain 70-15 / ATCC MYA-4617 / FGSC 8958) (Rice blast fungus).